Here is a 148-residue protein sequence, read N- to C-terminus: uncharacterized protein (148 aa).

This sequence to A.tumefaciens Atu0565/AGR_C_992.

This is an uncharacterized protein from Rhizobium meliloti (strain 1021) (Ensifer meliloti).